The chain runs to 54 residues: UPF0391 membrane protein msr3702 (54 aa).

2 consecutive transmembrane segments (helical) span residues 4–24 (WALV…GGIA) and 30–50 (IAQI…LAGL).

It belongs to the UPF0391 family.

Its subcellular location is the cell membrane. The protein is UPF0391 membrane protein msr3702 of Mesorhizobium japonicum (strain LMG 29417 / CECT 9101 / MAFF 303099) (Mesorhizobium loti (strain MAFF 303099)).